The chain runs to 223 residues: Uracil-DNA glycosylase (223 aa).

Asp67 serves as the catalytic Proton acceptor.

The protein belongs to the uracil-DNA glycosylase (UDG) superfamily. UNG family.

It localises to the cytoplasm. It catalyses the reaction Hydrolyzes single-stranded DNA or mismatched double-stranded DNA and polynucleotides, releasing free uracil.. Its function is as follows. Excises uracil residues from the DNA which can arise as a result of misincorporation of dUMP residues by DNA polymerase or due to deamination of cytosine. The sequence is that of Uracil-DNA glycosylase from Borrelia hermsii (strain HS1 / DAH).